A 337-amino-acid polypeptide reads, in one-letter code: Glycerol-3-phosphate dehydrogenase [NAD(P)+] (337 aa).

NADPH contacts are provided by Trp11, Arg30, and Lys102. Sn-glycerol 3-phosphate contacts are provided by Lys102, Gly138, and Ser140. Residue Ala142 coordinates NADPH. Lys193, Asp246, Ser256, Arg257, and Asn258 together coordinate sn-glycerol 3-phosphate. Lys193 (proton acceptor) is an active-site residue. Arg257 lines the NADPH pocket. The NADPH site is built by Val281 and Glu283.

This sequence belongs to the NAD-dependent glycerol-3-phosphate dehydrogenase family.

The protein resides in the cytoplasm. The catalysed reaction is sn-glycerol 3-phosphate + NAD(+) = dihydroxyacetone phosphate + NADH + H(+). It catalyses the reaction sn-glycerol 3-phosphate + NADP(+) = dihydroxyacetone phosphate + NADPH + H(+). The protein operates within membrane lipid metabolism; glycerophospholipid metabolism. Functionally, catalyzes the reduction of the glycolytic intermediate dihydroxyacetone phosphate (DHAP) to sn-glycerol 3-phosphate (G3P), the key precursor for phospholipid synthesis. In Variovorax paradoxus (strain S110), this protein is Glycerol-3-phosphate dehydrogenase [NAD(P)+].